Here is a 199-residue protein sequence, read N- to C-terminus: Pyridoxine/pyridoxamine 5'-phosphate oxidase (199 aa).

Residues 45–50 (RVVLLK), 60–61 (FT), R66, K67, and Q89 each bind FMN. Position 50 (K50) interacts with substrate. Residues Y107, R111, and S115 each coordinate substrate. FMN-binding positions include 124–125 (QS) and W169. A substrate-binding site is contributed by 175 to 177 (RIH). R179 contributes to the FMN binding site.

It belongs to the pyridoxamine 5'-phosphate oxidase family. Homodimer. Requires FMN as cofactor.

It catalyses the reaction pyridoxamine 5'-phosphate + O2 + H2O = pyridoxal 5'-phosphate + H2O2 + NH4(+). The catalysed reaction is pyridoxine 5'-phosphate + O2 = pyridoxal 5'-phosphate + H2O2. Its pathway is cofactor metabolism; pyridoxal 5'-phosphate salvage; pyridoxal 5'-phosphate from pyridoxamine 5'-phosphate: step 1/1. It functions in the pathway cofactor metabolism; pyridoxal 5'-phosphate salvage; pyridoxal 5'-phosphate from pyridoxine 5'-phosphate: step 1/1. Catalyzes the oxidation of either pyridoxine 5'-phosphate (PNP) or pyridoxamine 5'-phosphate (PMP) into pyridoxal 5'-phosphate (PLP). The sequence is that of Pyridoxine/pyridoxamine 5'-phosphate oxidase from Ehrlichia chaffeensis (strain ATCC CRL-10679 / Arkansas).